A 1050-amino-acid chain; its full sequence is RecBCD enzyme subunit RecB (1050 aa).

The 443-residue stretch at 1–443 (MKPFNIFDSN…LQLVNNYRST (443 aa)) folds into the UvrD-like helicase ATP-binding domain. The DNA-binding and helicase activity, interacts with RecC stretch occupies residues 1 to 766 (MKPFNIFDSN…TNYVKLEGTQ (766 aa)). Position 21–28 (21–28 (ASAGTGKT)) interacts with ATP. In terms of domain architecture, UvrD-like helicase C-terminal spans 458 to 701 (SPFLEIPGYL…KITTIHSSKG (244 aa)). Positions 814 to 1050 (PKTIFSFSST…KAIQKCQAYH (237 aa)) are nuclease activity, interacts with RecD and RecA. Residues H859, D945, and D958 each coordinate Mg(2+). Catalysis depends on D958, which acts as the For nuclease activity.

The protein belongs to the helicase family. UvrD subfamily. Heterotrimer of RecB, RecC and RecD. All subunits contribute to DNA-binding. Interacts with RecA. Mg(2+) is required as a cofactor.

It carries out the reaction Exonucleolytic cleavage (in the presence of ATP) in either 5'- to 3'- or 3'- to 5'-direction to yield 5'-phosphooligonucleotides.. The enzyme catalyses Couples ATP hydrolysis with the unwinding of duplex DNA by translocating in the 3'-5' direction.. It catalyses the reaction ATP + H2O = ADP + phosphate + H(+). A helicase/nuclease that prepares dsDNA breaks (DSB) for recombinational DNA repair. Binds to DSBs and unwinds DNA via a highly rapid and processive ATP-dependent bidirectional helicase activity. Unwinds dsDNA until it encounters a Chi (crossover hotspot instigator) sequence from the 3' direction. Cuts ssDNA a few nucleotides 3' to the Chi site. The properties and activities of the enzyme are changed at Chi. The Chi-altered holoenzyme produces a long 3'-ssDNA overhang and facilitates RecA-binding to the ssDNA for homologous DNA recombination and repair. Holoenzyme degrades any linearized DNA that is unable to undergo homologous recombination. In the holoenzyme this subunit contributes ATPase, 3'-5' helicase, exonuclease activity and loads RecA onto ssDNA. This Chlamydia pneumoniae (Chlamydophila pneumoniae) protein is RecBCD enzyme subunit RecB.